Consider the following 70-residue polypeptide: MPLPKIDDWRELSDEEISEQILATKKELFELRLQKATRQLEKPHLVRHAKHKLAQLMLLESQRTAAAKEK.

Belongs to the universal ribosomal protein uL29 family.

This chain is Large ribosomal subunit protein uL29, found in Gloeobacter violaceus (strain ATCC 29082 / PCC 7421).